A 390-amino-acid chain; its full sequence is Telobox protein 1 (390 aa).

The interval 30–57 (ENPSKREVAQDVPGFERKPTKVRKPRVK) is disordered. Positions 32–48 (PSKREVAQDVPGFERKP) are enriched in basic and acidic residues. HTH myb-type domains follow at residues 50 to 109 (KVRK…PEDY) and 135 to 193 (STRK…PERY). A DNA-binding region (H-T-H motif) is located at residues 78 to 105 (WKKILLDERFHFTNRSPNDLKDRFRTIL). The tract at residues 115 to 143 (NAKTHMGRPQKIPHTVGLSKSTRKERKQF) is disordered. The H-T-H motif DNA-binding region spans 162–189 (WTRISKDANLGLQNRRSTDLRDRFRNAF). 2 stretches are compositionally biased toward polar residues: residues 244–257 (SNPN…TEQP) and 322–340 (ISPS…SIQQ). Disordered regions lie at residues 244–278 (SNPN…FTSQ) and 316–390 (QPPS…DNRG). Over residues 347–360 (PPLSSNTLNSSTLP) the composition is skewed to low complexity.

It localises to the nucleus. Its function is as follows. General transcription factor with prominent roles in controlling histone levels and stability. Binds and regulates the activities of many promoters, including those controlling the expression of all four types of canonical histones. Is also involved in the centromeric loading of cnp1 and maintenance of centromere identity. Moreover, regulates the expression of cdc2, a protease capable of histone clipping. The chain is Telobox protein 1 from Schizosaccharomyces pombe (strain 972 / ATCC 24843) (Fission yeast).